The following is a 73-amino-acid chain: Guanine nucleotide-binding protein G(I)/G(S)/G(O) subunit gamma-11 (73 aa).

A disordered region spans residues aspartate 51 to serine 73. Cysteine 70 bears the Cysteine methyl ester mark. Residue cysteine 70 is the site of S-farnesyl cysteine attachment. Residues valine 71 to serine 73 constitute a propeptide, removed in mature form.

The protein belongs to the G protein gamma family. G proteins are composed of 3 units, alpha, beta and gamma. Interacts with beta-1 and beta-3, but not with beta-2. In terms of tissue distribution, abundantly expressed in all tissues tested except for brain.

It is found in the cell membrane. Guanine nucleotide-binding proteins (G proteins) are involved as a modulator or transducer in various transmembrane signaling systems. The beta and gamma chains are required for the GTPase activity, for replacement of GDP by GTP, and for G protein-effector interaction. The polypeptide is Guanine nucleotide-binding protein G(I)/G(S)/G(O) subunit gamma-11 (GNG11) (Homo sapiens (Human)).